The following is a 387-amino-acid chain: Na(+)/H(+)-K(+) antiporter GerN (387 aa).

Transmembrane regions (helical) follow at residues 29 to 49, 54 to 74, 87 to 107, 114 to 134, 149 to 169, 175 to 195, 219 to 239, 263 to 283, 290 to 310, 324 to 344, and 347 to 367; these read PSVL…LGWI, LLTQ…GLET, LAVA…SGLV, NAVF…VQTL, LGAA…AMSF, VNLT…ILIG, ALII…AGII, PIAY…NITF, IWFI…GCGF, IIGA…GTGL, and GLLA…TTMI.

Belongs to the monovalent cation:proton antiporter 2 (CPA2) transporter (TC 2.A.37) family.

The protein resides in the membrane. Functionally, na(+)/H(+) antiporter that extrudes sodium in exchange for external protons. Can also use potassium as a coupling ion, without completely replacing H(+). This Na(+)/H(+)-K(+) antiport is much more rapid than Na(+)/H(+) antiport. Can also extrude lithium. Important for the inosine-dependent germination of spores. The sequence is that of Na(+)/H(+)-K(+) antiporter GerN (gerN) from Bacillus cereus.